Consider the following 217-residue polypeptide: Ribonuclease T (217 aa).

Residues valine 20–phenylalanine 194 form the Exonuclease domain. Mg(2+)-binding residues include aspartate 23, glutamate 25, histidine 181, and aspartate 186. The active-site Proton donor/acceptor is the histidine 181.

The protein belongs to the RNase T family. As to quaternary structure, homodimer. The cofactor is Mg(2+).

Trims short 3' overhangs of a variety of RNA species, leaving a one or two nucleotide 3' overhang. Responsible for the end-turnover of tRNA: specifically removes the terminal AMP residue from uncharged tRNA (tRNA-C-C-A). Also appears to be involved in tRNA biosynthesis. The protein is Ribonuclease T of Photorhabdus laumondii subsp. laumondii (strain DSM 15139 / CIP 105565 / TT01) (Photorhabdus luminescens subsp. laumondii).